Reading from the N-terminus, the 340-residue chain is E3 ubiquitin ligase BIG BROTHER-related (340 aa).

Disordered stretches follow at residues 1–56 (MPME…GVGE) and 133–182 (YDED…GNSD). Over residues 34-46 (NRQTGVVSDTGSG) the composition is skewed to polar residues. Acidic residues-rich tracts occupy residues 133–164 (YDEDEFDDPENEDEDDDEDEYETDDDPQEDGL) and 173–182 (DDQEDDGNSD). The RING-type; atypical zinc finger occupies 288 to 329 (CVICRLDYEDDEDLILLPCKHSYHSECINNWLKINKVCPVCS).

Post-translationally, auto-ubiquitinated.

The catalysed reaction is S-ubiquitinyl-[E2 ubiquitin-conjugating enzyme]-L-cysteine + [acceptor protein]-L-lysine = [E2 ubiquitin-conjugating enzyme]-L-cysteine + N(6)-ubiquitinyl-[acceptor protein]-L-lysine.. It participates in protein modification; protein ubiquitination. E3 ubiquitin-ligase probably involved in organ size regulation. This is E3 ubiquitin ligase BIG BROTHER-related (BBR) from Arabidopsis thaliana (Mouse-ear cress).